A 345-amino-acid polypeptide reads, in one-letter code: tRNA N6-adenosine threonylcarbamoyltransferase (345 aa).

Positions 113 and 117 each coordinate Fe cation. Substrate contacts are provided by residues 142–146 (AISGG), aspartate 175, glycine 188, aspartate 192, and asparagine 282. A Fe cation-binding site is contributed by aspartate 310.

This sequence belongs to the KAE1 / TsaD family. Fe(2+) is required as a cofactor.

The protein localises to the cytoplasm. The enzyme catalyses L-threonylcarbamoyladenylate + adenosine(37) in tRNA = N(6)-L-threonylcarbamoyladenosine(37) in tRNA + AMP + H(+). Its function is as follows. Required for the formation of a threonylcarbamoyl group on adenosine at position 37 (t(6)A37) in tRNAs that read codons beginning with adenine. Is involved in the transfer of the threonylcarbamoyl moiety of threonylcarbamoyl-AMP (TC-AMP) to the N6 group of A37, together with TsaE and TsaB. TsaD likely plays a direct catalytic role in this reaction. The protein is tRNA N6-adenosine threonylcarbamoyltransferase of Bdellovibrio bacteriovorus (strain ATCC 15356 / DSM 50701 / NCIMB 9529 / HD100).